A 386-amino-acid polypeptide reads, in one-letter code: Probable family 17 glucosidase SCW4 (386 aa).

A signal peptide spans 1–19 (MRLSNLIASASLLSAATLA). The propeptide occupies 20–30 (APANHEHKDKR). The interval 88–127 (ENNSQVSAAASPASSSAATSTQSSSSSQASSSSSSGEDVS) is disordered. An N-linked (GlcNAc...) asparagine glycan is attached at Asn89. Residue Glu323 is the Nucleophile of the active site.

Belongs to the glycosyl hydrolase 17 family. Post-translationally, N-glycosylated.

The protein localises to the secreted. Its subcellular location is the cell wall. In terms of biological role, glucanases possibly play a role in cell expansion during growth, in cell-cell fusion during mating, and in spore release during sporulation. This is Probable family 17 glucosidase SCW4 (SCW4) from Saccharomyces cerevisiae (strain ATCC 204508 / S288c) (Baker's yeast).